Reading from the N-terminus, the 122-residue chain is Small ribosomal subunit protein uS13 (122 aa).

Positions 97–122 (PVRGQRTHTNARTRKGPAKAIAGKKK) are disordered.

It belongs to the universal ribosomal protein uS13 family. In terms of assembly, part of the 30S ribosomal subunit. Forms a loose heterodimer with protein S19. Forms two bridges to the 50S subunit in the 70S ribosome.

Located at the top of the head of the 30S subunit, it contacts several helices of the 16S rRNA. In the 70S ribosome it contacts the 23S rRNA (bridge B1a) and protein L5 of the 50S subunit (bridge B1b), connecting the 2 subunits; these bridges are implicated in subunit movement. Contacts the tRNAs in the A and P-sites. The chain is Small ribosomal subunit protein uS13 from Brucella anthropi (strain ATCC 49188 / DSM 6882 / CCUG 24695 / JCM 21032 / LMG 3331 / NBRC 15819 / NCTC 12168 / Alc 37) (Ochrobactrum anthropi).